Consider the following 447-residue polypeptide: N-succinylarginine dihydrolase (447 aa).

Substrate contacts are provided by residues 19–28, asparagine 110, and 137–138; these read AGLSFGNEAS and HR. The active site involves glutamate 174. Arginine 212 is a substrate binding site. Histidine 248 is a catalytic residue. Residues aspartate 250 and asparagine 359 each coordinate substrate. Cysteine 365 acts as the Nucleophile in catalysis.

Belongs to the succinylarginine dihydrolase family. Homodimer.

The catalysed reaction is N(2)-succinyl-L-arginine + 2 H2O + 2 H(+) = N(2)-succinyl-L-ornithine + 2 NH4(+) + CO2. It participates in amino-acid degradation; L-arginine degradation via AST pathway; L-glutamate and succinate from L-arginine: step 2/5. In terms of biological role, catalyzes the hydrolysis of N(2)-succinylarginine into N(2)-succinylornithine, ammonia and CO(2). The chain is N-succinylarginine dihydrolase from Salmonella gallinarum (strain 287/91 / NCTC 13346).